Reading from the N-terminus, the 285-residue chain is Proteasome subunit beta (285 aa).

The propeptide at 1 to 50 (MTAEHPARLPQAFMTPGSSSFVDFLAAHDPSLLPSSRALPAGSAPPAPHG) is removed in mature form; by autocatalysis. The active-site Nucleophile is T51. Residues 266–285 (RTRQARSSRSRHGSLGGDLR) form a disordered region.

It belongs to the peptidase T1B family. The 20S proteasome core is composed of 14 alpha and 14 beta subunits that assemble into four stacked heptameric rings, resulting in a barrel-shaped structure. The two inner rings, each composed of seven catalytic beta subunits, are sandwiched by two outer rings, each composed of seven alpha subunits. The catalytic chamber with the active sites is on the inside of the barrel. Has a gated structure, the ends of the cylinder being occluded by the N-termini of the alpha-subunits. Is capped by the proteasome-associated ATPase, ARC.

Its subcellular location is the cytoplasm. It carries out the reaction Cleavage of peptide bonds with very broad specificity.. Its pathway is protein degradation; proteasomal Pup-dependent pathway. The formation of the proteasomal ATPase ARC-20S proteasome complex, likely via the docking of the C-termini of ARC into the intersubunit pockets in the alpha-rings, may trigger opening of the gate for substrate entry. Interconversion between the open-gate and close-gate conformations leads to a dynamic regulation of the 20S proteasome proteolysis activity. Component of the proteasome core, a large protease complex with broad specificity involved in protein degradation. This is Proteasome subunit beta from Sanguibacter keddieii (strain ATCC 51767 / DSM 10542 / NCFB 3025 / ST-74).